We begin with the raw amino-acid sequence, 292 residues long: Elongation factor Ts (292 aa).

The segment at 79 to 82 is involved in Mg(2+) ion dislocation from EF-Tu; the sequence is TDFV.

The protein belongs to the EF-Ts family.

Its subcellular location is the cytoplasm. In terms of biological role, associates with the EF-Tu.GDP complex and induces the exchange of GDP to GTP. It remains bound to the aminoacyl-tRNA.EF-Tu.GTP complex up to the GTP hydrolysis stage on the ribosome. The protein is Elongation factor Ts of Staphylococcus epidermidis (strain ATCC 12228 / FDA PCI 1200).